Here is an 877-residue protein sequence, read N- to C-terminus: EF-hand domain-containing family member B (877 aa).

Disordered regions lie at residues 1–47 (MCSF…GRKS) and 268–290 (AQQP…PDRI). EF-hand domains lie at 605-640 (QNFD…ACLH) and 641-676 (LDEK…KDKT). The Ca(2+) site is built by D618, D622, E629, D654, D656, D658, and E665.

In terms of assembly, microtubule inner protein component of sperm flagellar doublet microtubules. Interacts with STIM1 and ORAI1; the interactions take place upon Ca(2+)-store depletion and dissociate through a Ca(2+)-dependent mechanism. Interaction with STIM1 inhibits STIM1 interaction with SARAF. Expressed in trachea multiciliated cells.

It localises to the cytoplasm. The protein localises to the cytoskeleton. The protein resides in the cilium axoneme. It is found in the flagellum axoneme. Functionally, microtubule inner protein (MIP) part of the dynein-decorated doublet microtubules (DMTs) in cilia axoneme, which is required for motile cilia beating. Cytosolic sensor for calcium, modulates the interaction of STIM1 and ORAI1 upon store depletion and the activation of store-operated Ca(2+) entry (SOCE) and NFAT translocation from cytosol to nucleus. In Bos taurus (Bovine), this protein is EF-hand domain-containing family member B.